A 988-amino-acid chain; its full sequence is Little elongation complex subunit 2 (988 aa).

Ser-322 carries the phosphoserine modification. Disordered stretches follow at residues 402–422 and 500–587; these read FGVTTTSPPRSPSSESDSSAP and VEGG…PCGS. Residues 413-422 show a composition bias toward low complexity; it reads PSSESDSSAP. Residues 534–547 show a composition bias toward basic and acidic residues; the sequence is NEVHRTEGISKESD. Residues 563 to 576 show a composition bias toward low complexity; that stretch reads NANNPNNTATASEA. Position 587 is a phosphoserine (Ser-587). Thr-589 is modified (phosphothreonine). Disordered stretches follow at residues 604–633, 673–706, and 942–968; these read DGKTADLGSRPNSSAQASAGNQATTTVSEE, PLTNSEESKQPPASEQPSAALDAAPWPKSSWPSA, and AAQAKVGGTRMPTRNHRNPVSMETKSS. Low complexity predominate over residues 615–629; sequence NSSAQASAGNQATTT.

Belongs to the ICE2 family. Component of the little elongation complex (LEC), at least composed of ELL (ELL, ELL2 or ELL3), ZC3H8, ICE1 and ICE2. Interacts with ICE1 (via C-terminus domain). Interacts with ELL. As to expression, expressed in brain, kidney, liver and testis.

It is found in the nucleus. Functionally, component of the little elongation complex (LEC), a complex required to regulate small nuclear RNA (snRNA) gene transcription by RNA polymerase II and III. The protein is Little elongation complex subunit 2 (Ice2) of Mus musculus (Mouse).